A 128-amino-acid chain; its full sequence is 2-iminobutanoate/2-iminopropanoate deaminase (128 aa).

Arginine 105 provides a ligand contact to substrate.

It belongs to the RutC family. In terms of assembly, homotrimer.

It localises to the cytoplasm. It catalyses the reaction 2-iminobutanoate + H2O = 2-oxobutanoate + NH4(+). It carries out the reaction 2-iminopropanoate + H2O = pyruvate + NH4(+). It participates in amino-acid biosynthesis; L-isoleucine biosynthesis; 2-oxobutanoate from L-threonine. Accelerates the release of ammonia from reactive enamine/imine intermediates of the PLP-dependent threonine dehydratase (IlvA) in the low water environment of the cell. It catalyzes the deamination of enamine/imine intermediates to yield 2-ketobutyrate and ammonia. It is required for the detoxification of reactive intermediates of IlvA due to their highly nucleophilic abilities and to avoid they are captured by anthranilate phosphoribosyltransferase (TrpD) to generate PRA, an intermediate in the alternative pyrimidine biosynthetic (APB) pathway. Also required for full activity of IlvE which is involved in the isoleucine biosynthesis. RidA also accelerates the release of pyruvate produced by IlvA from L-serine. This Salmonella typhimurium (strain LT2 / SGSC1412 / ATCC 700720) protein is 2-iminobutanoate/2-iminopropanoate deaminase.